Here is a 148-residue protein sequence, read N- to C-terminus: Ubiquitin-conjugating enzyme E2 29 (148 aa).

Residues 1–147 form the UBC core domain; that stretch reads MATRRILKEL…ARSWTQKYAL (147 aa). The active-site Glycyl thioester intermediate is cysteine 85.

Belongs to the ubiquitin-conjugating enzyme family.

The enzyme catalyses S-ubiquitinyl-[E1 ubiquitin-activating enzyme]-L-cysteine + [E2 ubiquitin-conjugating enzyme]-L-cysteine = [E1 ubiquitin-activating enzyme]-L-cysteine + S-ubiquitinyl-[E2 ubiquitin-conjugating enzyme]-L-cysteine.. It participates in protein modification; protein ubiquitination. Accepts the ubiquitin from the E1 complex and catalyzes its covalent attachment to other proteins. This chain is Ubiquitin-conjugating enzyme E2 29 (UBC29), found in Arabidopsis thaliana (Mouse-ear cress).